The sequence spans 246 residues: YjeF N-terminal domain-containing 3 (246 aa).

In terms of domain architecture, YjeF N-terminal spans 24 to 234 (VATVETELLR…DIQKKYELNL (211 aa)).

In terms of assembly, interacts with apoa1a. Binds to high-density lipoprotein.

Its function is as follows. Accelerates cholesterol efflux from endothelial cells to high-density lipoprotein (HDL) and thereby regulates angiogenesis. Orchestrates hematopoietic stem and progenitor cell emergence from the hemogenic endothelium, a type of specialized endothelium manifesting hematopoietic potential. YJEFN3-mediated cholesterol efflux activates endothelial SREBF2, the master transcription factor for cholesterol biosynthesis, which in turn transactivates NOTCH and promotes hematopoietic stem and progenitor cell emergence. The protein is YjeF N-terminal domain-containing 3 of Danio rerio (Zebrafish).